The primary structure comprises 160 residues: 6,7-dimethyl-8-ribityllumazine synthase (160 aa).

Residues Trp28, 59–61 (ALE), and 81–83 (CVI) each bind 5-amino-6-(D-ribitylamino)uracil. 86–87 (ET) contacts (2S)-2-hydroxy-3-oxobutyl phosphate. Catalysis depends on His89, which acts as the Proton donor. 5-amino-6-(D-ribitylamino)uracil is bound at residue Asn114. Position 128 (Arg128) interacts with (2S)-2-hydroxy-3-oxobutyl phosphate.

The protein belongs to the DMRL synthase family.

The enzyme catalyses (2S)-2-hydroxy-3-oxobutyl phosphate + 5-amino-6-(D-ribitylamino)uracil = 6,7-dimethyl-8-(1-D-ribityl)lumazine + phosphate + 2 H2O + H(+). It participates in cofactor biosynthesis; riboflavin biosynthesis; riboflavin from 2-hydroxy-3-oxobutyl phosphate and 5-amino-6-(D-ribitylamino)uracil: step 1/2. In terms of biological role, catalyzes the formation of 6,7-dimethyl-8-ribityllumazine by condensation of 5-amino-6-(D-ribitylamino)uracil with 3,4-dihydroxy-2-butanone 4-phosphate. This is the penultimate step in the biosynthesis of riboflavin. This Corynebacterium urealyticum (strain ATCC 43042 / DSM 7109) protein is 6,7-dimethyl-8-ribityllumazine synthase.